The primary structure comprises 788 residues: MTTDYSSPAYLQKVDKYWRAANYLSVGQLYLKDNPLLQRPLKASDVKVHPIGHWGTIAGQNFIYAHLNRVINKYGLKMFYVEGPGHGGQVMVSNSYLDGTYTDIYPEITQDVEGMQKLFKQFSFPGGVASHAAPETPGSIHEGGELGYSISHGVGAILDNPDEIAAVVVGDGESETGPLATSWQSTKFINPINDGAVLPILNLNGFKISNPTIFGRTSDAKIKEYFESMNWEPIFVEGDDPEKVHPALAKAMDEAVEKIKAIQKHARENNDATLPVWPMIVFRAPKGWTGPKSWDGDKIEGSFRAHQIPIPVDQNDMEHADALVDWLESYQPKELFNEDGSLKDDIKEIIPTGDSRMAANPITNGGVDPKALNLPNFRDYAVDTSKEGANVKQDMIVWSDYLRDVIKKNPDNFRLFGPDETMSNRLYGVFETTNRQWMEDIHPDSDQYEAPAGRVLDAQLSEHQAEGWLEGYVLTGRHGLFASYEAFLRVVDSMLTQHFKWLRKANELDWRKKYPSLNIIAASTVFQQDHNGYTHQDPGALTHLAEKKPEYIREYLPADANTLLAVGDVIFRSQEKINYVVTSKHPRQQWFSIEEAKQLVDNGLGIIDWASTDQGSEPDIVFAAAGTEPTLETLAAIQLLHDSFPEMKIRFVNVVDILKLRSPEKDPRGLSDAEFDHYFTKDKPVVFAFHGYEDLVRDIFFDRHNHNLYVHGYRENGDITTPFDVRVMNQMDRFDLAKSAIAAQPAMENTGAAFVQSMDNMLAKHNAYIRDAGTDLPEVNDWQWKGLK.

This sequence belongs to the XFP family. It depends on thiamine diphosphate as a cofactor.

The sequence is that of Probable phosphoketolase 1 from Lactiplantibacillus plantarum (strain ATCC BAA-793 / NCIMB 8826 / WCFS1) (Lactobacillus plantarum).